The primary structure comprises 518 residues: Kelch repeat and BTB domain-containing protein 4 (518 aa).

The 68-residue stretch at 45–112 folds into the BTB domain; the sequence is ADVTISVEGR…IYHGTVKLRA (68 aa). In terms of domain architecture, BACK spans 147-239; it reads CLQVMWLADR…SLKEIGENVH (93 aa). Kelch repeat units follow at residues 239–285, 286–328, 331–378, 380–430, and 432–481; these read HIYL…KHGG, DLYV…SVPG, AIYS…NLNG, IYLL…VHKD, and VFIV…VFRD.

Component of the BCR(KBTBD4) E3 ubiquitin ligase complex, at least composed of CUL3, KBTBD4 and RBX1.

Substrate-specific adapter of a BCR (BTB-CUL3-RBX1) E3 ubiquitin ligase complex which targets CoREST corepressor complex components RCOR1, KDM1A/LSD1 and HDAC2 for proteasomal degradation. RCOR1 is likely to be the primary target while degradation of KDM1A and HDAC2 is likely due to their association with RCOR1. Also targets RCOR3, MIER2 and MIER3 for proteasomal degradation as well as associated proteins ZNF217 and RREB1. Degradation is dependent on the presence of an ELM2 domain in the target proteins. The chain is Kelch repeat and BTB domain-containing protein 4 (KBTBD4) from Pongo abelii (Sumatran orangutan).